The chain runs to 417 residues: NADH-quinone oxidoreductase subunit D (417 aa).

This sequence belongs to the complex I 49 kDa subunit family. NDH-1 is composed of 14 different subunits. Subunits NuoB, C, D, E, F, and G constitute the peripheral sector of the complex.

The protein resides in the cell inner membrane. It catalyses the reaction a quinone + NADH + 5 H(+)(in) = a quinol + NAD(+) + 4 H(+)(out). NDH-1 shuttles electrons from NADH, via FMN and iron-sulfur (Fe-S) centers, to quinones in the respiratory chain. The immediate electron acceptor for the enzyme in this species is believed to be ubiquinone. Couples the redox reaction to proton translocation (for every two electrons transferred, four hydrogen ions are translocated across the cytoplasmic membrane), and thus conserves the redox energy in a proton gradient. The sequence is that of NADH-quinone oxidoreductase subunit D from Burkholderia mallei (strain NCTC 10247).